We begin with the raw amino-acid sequence, 528 residues long: MASVHGTTYELLRRQGIDTVFGNPGSNELPFLKDFPEDFRYILALQEACVVGIADGYAQASRKPAFINLHSAAGTGNAMGALSNAWNSHSPLIVTAGQQTRAMIGVEALLTNVDAANLPRPLVKWSYEPASAAEVPHAMSRAIHMASMAPQGPVYLSVPYDDWDKDADPQSHHLFDRHVSSSVRLNDQDLDILVKALNSASNPAIVLGPDVDAANANADCVMLAERLKAPVWVAPSAPRCPFPTRHPCFRGLMPAGIAAISQLLEGHDVVLVIGAPVFRYHQYDPGQYLKPGTRLISVTCDPLEAARAPMGDAIVADIGAMASALANLVEESSRQLPTAAPEPAKVDQDAGRLHPETVFDTLNDMAPENAIYLNESTSTTAQMWQRLNMRNPGSYYFCAAGGLGFALPAAIGVQLAEPERQVIAVIGDGSANYSISALWTAAQYNIPTIFVIMNNGTYGALRWFAGVLEAENVPGLDVPGIDFRALAKGYGVQALKADNLEQLKGSLQEALSAKGPVLIEVSTVSPVK.

Residues asparagine 117, leucine 118, and arginine 120 each contribute to the Mg(2+) site. The segment at 377–460 (TSTTAQMWQR…VIMNNGTYGA (84 aa)) is thiamine pyrophosphate binding. Residues aspartate 428, asparagine 455, and threonine 457 each contribute to the Ca(2+) site.

This sequence belongs to the TPP enzyme family. As to quaternary structure, homotetramer. Ca(2+) is required as a cofactor. Requires thiamine diphosphate as cofactor. Mg(2+) serves as cofactor.

The catalysed reaction is phenylglyoxylate + H(+) = benzaldehyde + CO2. It functions in the pathway aromatic compound metabolism; (R)-mandelate degradation; benzoate from (R)-mandelate: step 3/4. This Pseudomonas putida (Arthrobacter siderocapsulatus) protein is Benzoylformate decarboxylase (mdlC).